Reading from the N-terminus, the 563-residue chain is Arginine--tRNA ligase (563 aa).

The short motif at 120-130 (PNIAKPFHVGH) is the 'HIGH' region element.

The protein belongs to the class-I aminoacyl-tRNA synthetase family. Monomer.

Its subcellular location is the cytoplasm. The enzyme catalyses tRNA(Arg) + L-arginine + ATP = L-arginyl-tRNA(Arg) + AMP + diphosphate. In Clostridium beijerinckii (strain ATCC 51743 / NCIMB 8052) (Clostridium acetobutylicum), this protein is Arginine--tRNA ligase.